We begin with the raw amino-acid sequence, 475 residues long: Flotillin-like protein 4 (475 aa).

2 coiled-coil regions span residues 235–255 (ENQR…KKAA) and 305–325 (QYET…KEAE).

The protein belongs to the band 7/mec-2 family. Flotillin subfamily. Expressed in roots and nodules. Primarily expressed in vascular tissues. Upon induction of nodulation, expansion of expression in the root cortex in the region of elongating root hairs, which will eventually become colonized by bacteria. Expressed in the infection zone in nodules.

Its subcellular location is the membrane. It is found in the caveola. The protein resides in the cell membrane. Functionally, may act as a scaffolding protein within caveolar membranes, functionally participating in formation of caveolae or caveolae-like vesicles. Required for normal infection threads initiation and elongation and nodulation. Probably involved in polar growth of the infection thread. The polypeptide is Flotillin-like protein 4 (FLOT4) (Medicago truncatula (Barrel medic)).